A 262-amino-acid polypeptide reads, in one-letter code: Pyridoxine 5'-phosphate synthase (262 aa).

3-amino-2-oxopropyl phosphate is bound at residue Asn-6. 8–9 (DH) provides a ligand contact to 1-deoxy-D-xylulose 5-phosphate. 3-amino-2-oxopropyl phosphate is bound at residue Arg-17. Catalysis depends on His-42, which acts as the Proton acceptor. Positions 44 and 49 each coordinate 1-deoxy-D-xylulose 5-phosphate. Residue Glu-69 is the Proton acceptor of the active site. Thr-99 is a 1-deoxy-D-xylulose 5-phosphate binding site. Residue His-213 is the Proton donor of the active site. Residues Gly-214 and 235-236 (GH) each bind 3-amino-2-oxopropyl phosphate.

It belongs to the PNP synthase family. As to quaternary structure, homooctamer; tetramer of dimers.

Its subcellular location is the cytoplasm. It catalyses the reaction 3-amino-2-oxopropyl phosphate + 1-deoxy-D-xylulose 5-phosphate = pyridoxine 5'-phosphate + phosphate + 2 H2O + H(+). Its pathway is cofactor biosynthesis; pyridoxine 5'-phosphate biosynthesis; pyridoxine 5'-phosphate from D-erythrose 4-phosphate: step 5/5. Catalyzes the complicated ring closure reaction between the two acyclic compounds 1-deoxy-D-xylulose-5-phosphate (DXP) and 3-amino-2-oxopropyl phosphate (1-amino-acetone-3-phosphate or AAP) to form pyridoxine 5'-phosphate (PNP) and inorganic phosphate. This is Pyridoxine 5'-phosphate synthase from Wolinella succinogenes (strain ATCC 29543 / DSM 1740 / CCUG 13145 / JCM 31913 / LMG 7466 / NCTC 11488 / FDC 602W) (Vibrio succinogenes).